Reading from the N-terminus, the 519-residue chain is Probable FAD synthase (519 aa).

Residues 17–108 form a molybdenum cofactor biosynthesis protein-like region; sequence AILVIGDEIL…TDQMQFSDEI (92 aa). The FAD synthase stretch occupies residues 328 to 485; it reads QIALSFNGGK…SLGGRDNTVK (158 aa).

In the N-terminal section; belongs to the MoaB/Mog family. It in the C-terminal section; belongs to the PAPS reductase family. FAD1 subfamily. Mg(2+) is required as a cofactor.

The catalysed reaction is FMN + ATP + H(+) = FAD + diphosphate. It functions in the pathway cofactor biosynthesis; FAD biosynthesis; FAD from FMN: step 1/1. Functionally, catalyzes the adenylation of flavin mononucleotide (FMN) to form flavin adenine dinucleotide (FAD) coenzyme. This is Probable FAD synthase from Caenorhabditis elegans.